Here is a 348-residue protein sequence, read N- to C-terminus: Nicotinate-nucleotide--dimethylbenzimidazole phosphoribosyltransferase (348 aa).

Glu315 serves as the catalytic Proton acceptor.

This sequence belongs to the CobT family.

The enzyme catalyses 5,6-dimethylbenzimidazole + nicotinate beta-D-ribonucleotide = alpha-ribazole 5'-phosphate + nicotinate + H(+). It functions in the pathway nucleoside biosynthesis; alpha-ribazole biosynthesis; alpha-ribazole from 5,6-dimethylbenzimidazole: step 1/2. Its function is as follows. Catalyzes the synthesis of alpha-ribazole-5'-phosphate from nicotinate mononucleotide (NAMN) and 5,6-dimethylbenzimidazole (DMB). This chain is Nicotinate-nucleotide--dimethylbenzimidazole phosphoribosyltransferase, found in Dechloromonas aromatica (strain RCB).